A 275-amino-acid polypeptide reads, in one-letter code: Ribosomal RNA small subunit methyltransferase A (275 aa).

The S-adenosyl-L-methionine site is built by Asn-28, Leu-30, Gly-55, Glu-77, Asp-103, and Asn-123.

The protein belongs to the class I-like SAM-binding methyltransferase superfamily. rRNA adenine N(6)-methyltransferase family. RsmA subfamily.

It is found in the cytoplasm. The enzyme catalyses adenosine(1518)/adenosine(1519) in 16S rRNA + 4 S-adenosyl-L-methionine = N(6)-dimethyladenosine(1518)/N(6)-dimethyladenosine(1519) in 16S rRNA + 4 S-adenosyl-L-homocysteine + 4 H(+). In terms of biological role, specifically dimethylates two adjacent adenosines (A1518 and A1519) in the loop of a conserved hairpin near the 3'-end of 16S rRNA in the 30S particle. May play a critical role in biogenesis of 30S subunits. In Rhizobium etli (strain CIAT 652), this protein is Ribosomal RNA small subunit methyltransferase A.